Reading from the N-terminus, the 104-residue chain is Large ribosomal subunit protein uL23 (104 aa).

This sequence belongs to the universal ribosomal protein uL23 family. As to quaternary structure, part of the 50S ribosomal subunit. Contacts protein L29, and trigger factor when it is bound to the ribosome.

Its function is as follows. One of the early assembly proteins it binds 23S rRNA. One of the proteins that surrounds the polypeptide exit tunnel on the outside of the ribosome. Forms the main docking site for trigger factor binding to the ribosome. This chain is Large ribosomal subunit protein uL23, found in Nostoc sp. (strain PCC 7120 / SAG 25.82 / UTEX 2576).